The following is a 378-amino-acid chain: Glutamate 5-kinase (378 aa).

Lysine 19 contributes to the ATP binding site. Substrate-binding residues include serine 59, aspartate 146, and asparagine 158. Residues 178–179 and 220–226 each bind ATP; these read TD and TGGMATK. Residues 285–363 enclose the PUA domain; that stretch reads QGQIQVDAGA…GEIGEILGYK (79 aa).

Belongs to the glutamate 5-kinase family.

Its subcellular location is the cytoplasm. The catalysed reaction is L-glutamate + ATP = L-glutamyl 5-phosphate + ADP. The protein operates within amino-acid biosynthesis; L-proline biosynthesis; L-glutamate 5-semialdehyde from L-glutamate: step 1/2. Catalyzes the transfer of a phosphate group to glutamate to form L-glutamate 5-phosphate. The polypeptide is Glutamate 5-kinase (Moorella thermoacetica (strain ATCC 39073 / JCM 9320)).